Here is a 94-residue protein sequence, read N- to C-terminus: Large ribosomal subunit protein uL23 (94 aa).

This sequence belongs to the universal ribosomal protein uL23 family. As to quaternary structure, part of the 50S ribosomal subunit. Contacts protein L29, and trigger factor when it is bound to the ribosome.

Its function is as follows. One of the early assembly proteins it binds 23S rRNA. One of the proteins that surrounds the polypeptide exit tunnel on the outside of the ribosome. Forms the main docking site for trigger factor binding to the ribosome. This is Large ribosomal subunit protein uL23 from Roseiflexus sp. (strain RS-1).